A 59-amino-acid polypeptide reads, in one-letter code: Pycsar effector protein MePycTM (59 aa).

The helical transmembrane segment at valine 36 to alanine 56 threads the bilayer.

The protein resides in the cell membrane. Pycsar (pyrimidine cyclase system for antiphage resistance) provides immunity against bacteriophage. The pyrimidine cyclase (PycC) synthesizes cyclic nucleotides in response to infection; these serve as specific second messenger signals. The signals activate the adjacent effector, leading to bacterial cell death and abortive phage infection. A clade D Pycsar system. Its function is as follows. The effector gene of a two-gene Pycsar system. Expression of this and adjacent uridylate cyclase MePycC (AC A0A1C5G2V9) probably confers resistance to bacteriophage. The genes are probably only expressed in response to bacteriophage infection. Probably only responds to cUMP (produced by its cognate NTP cyclase), acts by impairing membrane integrity. The chain is Pycsar effector protein MePycTM from Micromonospora echinofusca.